The primary structure comprises 229 residues: tRNA pseudouridine synthase B (229 aa).

D52 serves as the catalytic Nucleophile.

The protein belongs to the pseudouridine synthase TruB family. Type 1 subfamily.

The enzyme catalyses uridine(55) in tRNA = pseudouridine(55) in tRNA. Functionally, responsible for synthesis of pseudouridine from uracil-55 in the psi GC loop of transfer RNAs. The protein is tRNA pseudouridine synthase B of Flavobacterium johnsoniae (strain ATCC 17061 / DSM 2064 / JCM 8514 / BCRC 14874 / CCUG 350202 / NBRC 14942 / NCIMB 11054 / UW101) (Cytophaga johnsonae).